The primary structure comprises 423 residues: MTESVLDYMTRLGRAAREASRVIGRASTAQKNRALQAAADALDAARAELAAANELDLAAGRASGLEPALLDRLALTPARIDGMITGLRQVASLPDPVGAIRDMSYRPSGIQVGKMRTPLGVIGIIYESRPNVTIDAASLCLKSGNATILRGGSEAIHSNRAIATCIQRGLAEAGLPAAVVQVVETTDREAVGALISMPEFVDVIVPRGGRGLIERISRDARVPVIKHLDGICHIYVSQHADLDKAWNVAFNAKTYRYGICGAMETLLVDQQVAERFLPEMARRFVEKGVELRGCERTQAIISAKPATEADWHTEYLDAILSIRVVDGLNQAIDHINHYGSHHTDSIISEHQGEARQFMAEVDSASVMLNTPTCFADGFEYGLGAEIGISTDKLHARGPVGLEGLTCEKYVVIGDGQLRGQGSC.

The protein belongs to the gamma-glutamyl phosphate reductase family.

The protein resides in the cytoplasm. The catalysed reaction is L-glutamate 5-semialdehyde + phosphate + NADP(+) = L-glutamyl 5-phosphate + NADPH + H(+). The protein operates within amino-acid biosynthesis; L-proline biosynthesis; L-glutamate 5-semialdehyde from L-glutamate: step 2/2. Catalyzes the NADPH-dependent reduction of L-glutamate 5-phosphate into L-glutamate 5-semialdehyde and phosphate. The product spontaneously undergoes cyclization to form 1-pyrroline-5-carboxylate. This chain is Gamma-glutamyl phosphate reductase, found in Pseudomonas putida (strain ATCC 700007 / DSM 6899 / JCM 31910 / BCRC 17059 / LMG 24140 / F1).